The primary structure comprises 23 residues: Septenin 2d (23 aa).

Expressed in skin glands.

It is found in the secreted. In terms of biological role, may act as an antimicrobial peptide. The protein is Septenin 2d of Osteopilus septentrionalis (Cuban treefrog).